Reading from the N-terminus, the 498-residue chain is Cystathionine beta-synthase (498 aa).

A disordered region spans residues 1–25 (MSAPEGPSKCTWTPNTTENTPHTTR). Residues 11-22 (TWTPNTTENTPH) are compositionally biased toward low complexity. K73 is modified (N6-(pyridoxal phosphate)lysine). Pyridoxal 5'-phosphate is bound by residues N103, 210–214 (GTGGT), and S302. 2 consecutive CBS domains span residues 374–430 (TLPK…KKAV) and 435–497 (VSKV…SQQK).

This sequence belongs to the cysteine synthase/cystathionine beta-synthase family. It depends on pyridoxal 5'-phosphate as a cofactor.

The enzyme catalyses L-homocysteine + L-serine = L,L-cystathionine + H2O. It participates in amino-acid biosynthesis; L-cysteine biosynthesis; L-cysteine from L-homocysteine and L-serine: step 1/2. The sequence is that of Cystathionine beta-synthase (cysB) from Dictyostelium discoideum (Social amoeba).